A 402-amino-acid polypeptide reads, in one-letter code: NADH-quinone oxidoreductase subunit D (402 aa).

The protein belongs to the complex I 49 kDa subunit family. As to quaternary structure, NDH-1 is composed of 14 different subunits. Subunits NuoB, C, D, E, F, and G constitute the peripheral sector of the complex.

The protein resides in the cell inner membrane. The catalysed reaction is a quinone + NADH + 5 H(+)(in) = a quinol + NAD(+) + 4 H(+)(out). Its function is as follows. NDH-1 shuttles electrons from NADH, via FMN and iron-sulfur (Fe-S) centers, to quinones in the respiratory chain. The immediate electron acceptor for the enzyme in this species is believed to be ubiquinone. Couples the redox reaction to proton translocation (for every two electrons transferred, four hydrogen ions are translocated across the cytoplasmic membrane), and thus conserves the redox energy in a proton gradient. This is NADH-quinone oxidoreductase subunit D from Maricaulis maris (strain MCS10) (Caulobacter maris).